Here is a 175-residue protein sequence, read N- to C-terminus: NADH-quinone oxidoreductase subunit I (175 aa).

4Fe-4S ferredoxin-type domains follow at residues 69 to 98 and 115 to 144; these read KRDE…IEAA and KKFE…LDGP. Residues Cys78, Cys81, Cys84, Cys88, Cys124, Cys127, Cys130, and Cys134 each coordinate [4Fe-4S] cluster.

It belongs to the complex I 23 kDa subunit family. NDH-1 is composed of 14 different subunits. Subunits NuoA, H, J, K, L, M, N constitute the membrane sector of the complex. It depends on [4Fe-4S] cluster as a cofactor.

It is found in the cell inner membrane. It catalyses the reaction a quinone + NADH + 5 H(+)(in) = a quinol + NAD(+) + 4 H(+)(out). Its function is as follows. NDH-1 shuttles electrons from NADH, via FMN and iron-sulfur (Fe-S) centers, to quinones in the respiratory chain. The immediate electron acceptor for the enzyme in this species is believed to be ubiquinone. Couples the redox reaction to proton translocation (for every two electrons transferred, four hydrogen ions are translocated across the cytoplasmic membrane), and thus conserves the redox energy in a proton gradient. The polypeptide is NADH-quinone oxidoreductase subunit I (Leptospira interrogans serogroup Icterohaemorrhagiae serovar Lai (strain 56601)).